We begin with the raw amino-acid sequence, 323 residues long: Prostaglandin F synthase 1 (323 aa).

NADP(+)-binding positions include 20–24 (GFGTY) and Asp50. Tyr55 serves as the catalytic Proton donor. His117 contacts substrate. NADP(+) contacts are provided by residues 166 to 167 (SN), Gln190, 216 to 221 (YAALGA), and 270 to 280 (KSFNKKRIKEN).

Belongs to the aldo/keto reductase family. Monomer. In terms of processing, the N-terminus is blocked.

Its subcellular location is the cytoplasm. The enzyme catalyses prostaglandin F2alpha + NADP(+) = prostaglandin D2 + NADPH + H(+). The protein operates within lipid metabolism; prostaglandin biosynthesis. Its function is as follows. Catalyzes the reduction of PGD(2) and PGH(2) to PGF(2 alpha) and a stereoisomer, respectively. It has a broad substrate specificity and also reduces other carbonyl compounds. The chain is Prostaglandin F synthase 1 from Bos taurus (Bovine).